A 189-amino-acid polypeptide reads, in one-letter code: UPF0149 protein VF_2102 (189 aa).

Belongs to the UPF0149 family.

The chain is UPF0149 protein VF_2102 from Aliivibrio fischeri (strain ATCC 700601 / ES114) (Vibrio fischeri).